The primary structure comprises 462 residues: EPD1-interacting receptor-like cytoplasmic serine/threonine-protein kinase 5A (462 aa).

The Protein kinase domain maps to 85–366; sequence FSSANFLGEG…DVVNILEPLL (282 aa). Residues 91-99 and K120 each bind ATP; that span reads LGEGGFGPV. Phosphotyrosine is present on residues Y165 and Y167. The Proton acceptor role is filled by D215.

This sequence belongs to the protein kinase superfamily. Ser/Thr protein kinase family. As to quaternary structure, interacts with the Verticillium dahliae elicitor EPD1 (AC G2WWH6). Post-translationally, phosphorylated at Tyr-165 and Tyr-167 in the presence of pathogen-associated molecular patterns (PAMPs); this triggers the expression of pathogenesis-related genes (e.g. PR5 and PR16). Mostly expressed in roots and, to a lesser extent, in leaves.

The protein localises to the cell membrane. It catalyses the reaction L-seryl-[protein] + ATP = O-phospho-L-seryl-[protein] + ADP + H(+). It carries out the reaction L-threonyl-[protein] + ATP = O-phospho-L-threonyl-[protein] + ADP + H(+). Its function is as follows. Required for pathogen-associated molecular pattern (PAMP, e.g. chitin and flg22)-triggered immunity (PTI) involving reactive oxygen species (ROS) accumulation and triggering plant defense, including defense-related gene expression (e.g. PR1 and LOX). Ensures specific recognition of the EPD1 effector of Verticillium dahliae, resulting in a hypersensitive response known as effector-triggered immunity (ETI), characterized by the activation of programmed cell death to limit infection by the pathogen. Priming plants with the incompatible pathogen V.dahliae leads to an increased resistance to compatible pathogens, as a result of systemic acquired resistance (SAR). This is EPD1-interacting receptor-like cytoplasmic serine/threonine-protein kinase 5A from Gossypium barbadense (Sea Island cotton).